Consider the following 423-residue polypeptide: D-threonate kinase (423 aa).

Residues D9, R51, and 81-84 (KIDS) each bind substrate. ATP-binding positions include S245, 355 to 358 (GGDI), and G401.

This sequence belongs to the four-carbon acid sugar kinase family.

The enzyme catalyses D-threonate + ATP = 4-O-phospho-D-threonate + ADP + H(+). In terms of biological role, catalyzes the ATP-dependent phosphorylation of D-threonate to D-threonate 4-phosphate. Can also phosphorylate 4-hydroxy-L-threonine, with lower efficiency. This side reaction may serve to deal with the toxicity of 4-hydroxy-L-threonine by converting it into 4-hydroxy-L-threonine 4-phosphate, a useful product that can be used by PdxA2. The protein is D-threonate kinase of Salmonella typhimurium (strain LT2 / SGSC1412 / ATCC 700720).